The chain runs to 266 residues: Putative carbamate hydrolase RutD (266 aa).

This sequence belongs to the AB hydrolase superfamily. Hydrolase RutD family.

It catalyses the reaction carbamate + 2 H(+) = NH4(+) + CO2. Its function is as follows. Involved in pyrimidine catabolism. May facilitate the hydrolysis of carbamate, a reaction that can also occur spontaneously. This Escherichia coli O26:H11 (strain 11368 / EHEC) protein is Putative carbamate hydrolase RutD.